Reading from the N-terminus, the 340-residue chain is RNA 3'-terminal phosphate cyclase (340 aa).

ATP-binding positions include Gln102 and 284 to 288 (FLGDQ). His308 functions as the Tele-AMP-histidine intermediate in the catalytic mechanism.

Belongs to the RNA 3'-terminal cyclase family. Type 1 subfamily.

The protein localises to the cytoplasm. It carries out the reaction a 3'-end 3'-phospho-ribonucleotide-RNA + ATP = a 3'-end 2',3'-cyclophospho-ribonucleotide-RNA + AMP + diphosphate. In terms of biological role, catalyzes the conversion of 3'-phosphate to a 2',3'-cyclic phosphodiester at the end of RNA. The mechanism of action of the enzyme occurs in 3 steps: (A) adenylation of the enzyme by ATP; (B) transfer of adenylate to an RNA-N3'P to produce RNA-N3'PP5'A; (C) and attack of the adjacent 2'-hydroxyl on the 3'-phosphorus in the diester linkage to produce the cyclic end product. The biological role of this enzyme is unknown but it is likely to function in some aspects of cellular RNA processing. The polypeptide is RNA 3'-terminal phosphate cyclase (Thermococcus onnurineus (strain NA1)).